We begin with the raw amino-acid sequence, 238 residues long: Type III pantothenate kinase (238 aa).

Aspartate 7–lysine 14 contacts ATP. Residues tyrosine 88 and glycine 95–arginine 98 contribute to the substrate site. Aspartate 97 serves as the catalytic Proton acceptor. Position 117 (aspartate 117) interacts with K(+). An ATP-binding site is contributed by threonine 120. Threonine 172 is a binding site for substrate.

The protein belongs to the type III pantothenate kinase family. In terms of assembly, homodimer. NH4(+) serves as cofactor. K(+) is required as a cofactor.

It localises to the cytoplasm. It carries out the reaction (R)-pantothenate + ATP = (R)-4'-phosphopantothenate + ADP + H(+). It functions in the pathway cofactor biosynthesis; coenzyme A biosynthesis; CoA from (R)-pantothenate: step 1/5. Functionally, catalyzes the phosphorylation of pantothenate (Pan), the first step in CoA biosynthesis. The sequence is that of Type III pantothenate kinase from Hahella chejuensis (strain KCTC 2396).